The sequence spans 338 residues: Ketol-acid reductoisomerase (NADP(+)) (338 aa).

Positions 1–181 (MKVFYDKDCD…GGGRAGIIET (181 aa)) constitute a KARI N-terminal Rossmann domain. NADP(+) contacts are provided by residues 24 to 27 (YGSQ), Arg-47, and Ser-52. His-107 is an active-site residue. Gly-133 contacts NADP(+). The KARI C-terminal knotted domain occupies 182-327 (NFREETETDL…AKLRAMMPWI (146 aa)). Residues Asp-190, Glu-194, Glu-226, and Glu-230 each coordinate Mg(2+). Residue Ser-251 coordinates substrate.

It belongs to the ketol-acid reductoisomerase family. It depends on Mg(2+) as a cofactor.

It carries out the reaction (2R)-2,3-dihydroxy-3-methylbutanoate + NADP(+) = (2S)-2-acetolactate + NADPH + H(+). It catalyses the reaction (2R,3R)-2,3-dihydroxy-3-methylpentanoate + NADP(+) = (S)-2-ethyl-2-hydroxy-3-oxobutanoate + NADPH + H(+). The protein operates within amino-acid biosynthesis; L-isoleucine biosynthesis; L-isoleucine from 2-oxobutanoate: step 2/4. Its pathway is amino-acid biosynthesis; L-valine biosynthesis; L-valine from pyruvate: step 2/4. Involved in the biosynthesis of branched-chain amino acids (BCAA). Catalyzes an alkyl-migration followed by a ketol-acid reduction of (S)-2-acetolactate (S2AL) to yield (R)-2,3-dihydroxy-isovalerate. In the isomerase reaction, S2AL is rearranged via a Mg-dependent methyl migration to produce 3-hydroxy-3-methyl-2-ketobutyrate (HMKB). In the reductase reaction, this 2-ketoacid undergoes a metal-dependent reduction by NADPH to yield (R)-2,3-dihydroxy-isovalerate. The polypeptide is Ketol-acid reductoisomerase (NADP(+)) (Herminiimonas arsenicoxydans).